The following is a 359-amino-acid chain: Carbamoyl phosphate synthase arginine-specific small chain (359 aa).

Residues 1-168 (MKAYLVLATG…VETFEGNGPH (168 aa)) are CPSase. 3 residues coordinate L-glutamine: serine 45, glycine 216, and glycine 218. The Glutamine amidotransferase type-1 domain occupies 168–355 (HIVLIDYGFK…IDDVAAKGRE (188 aa)). The Nucleophile role is filled by cysteine 243. L-glutamine-binding residues include leucine 244, glutamine 247, asparagine 285, and tyrosine 288. Residues histidine 328 and glutamate 330 contribute to the active site.

It belongs to the CarA family. Composed of two chains; the small (or glutamine) chain promotes the hydrolysis of glutamine to ammonia, which is used by the large (or ammonia) chain to synthesize carbamoyl phosphate. Tetramer of heterodimers (alpha,beta)4.

It catalyses the reaction hydrogencarbonate + L-glutamine + 2 ATP + H2O = carbamoyl phosphate + L-glutamate + 2 ADP + phosphate + 2 H(+). The catalysed reaction is L-glutamine + H2O = L-glutamate + NH4(+). The protein operates within amino-acid biosynthesis; L-arginine biosynthesis; carbamoyl phosphate from bicarbonate: step 1/1. Functionally, small subunit of the glutamine-dependent carbamoyl phosphate synthetase (CPSase). CPSase catalyzes the formation of carbamoyl phosphate from the ammonia moiety of glutamine, carbonate, and phosphate donated by ATP, constituting the first step of the biosynthetic pathway leading to arginine and/or urea. The small subunit (glutamine amidotransferase) binds and cleaves glutamine to supply the large subunit with the substrate ammonia. This is Carbamoyl phosphate synthase arginine-specific small chain from Halalkalibacterium halodurans (strain ATCC BAA-125 / DSM 18197 / FERM 7344 / JCM 9153 / C-125) (Bacillus halodurans).